Consider the following 465-residue polypeptide: Probable inactive receptor-like kinase BSK12 (465 aa).

The span at 1–12 shows a compositional bias: polar residues; that stretch reads MGCCYSLSSTVD. The segment at 1 to 34 is disordered; the sequence is MGCCYSLSSTVDPVQDHTTDASSEPRNGGGEDPP. Residue G2 is the site of N-myristoyl glycine attachment. 2 S-palmitoyl cysteine lipidation sites follow: C3 and C4. The region spanning 50–291 is the Protein kinase domain; it reads FSPENIVSDQ…KEIVATLETL (242 aa). Residues 56-64 and K78 contribute to the ATP site; that span reads VSDQTSDVV.

The protein belongs to the protein kinase superfamily. Ser/Thr protein kinase family. As to quaternary structure, interacts with YDA. Diacylation-mediated membrane association is essential for BSK12 function. Expressed at the mRNA level in the sperm cells in mature pollen, but the protein is only detectable in the zygote and the micropylar endosperm upon fertilization.

The protein localises to the cell membrane. Functionally, probable inactive protein kinase that activates the YODA MAP kinase cascade, which regulates the asymmetric first division and embryo polarity, by promoting the elongation of the zygote and the development of its basal daughter cell into the extra-embryonic suspensor. Acts as an adapter at the plasma membrane, possibly by recruiting and binding an activator. The chain is Probable inactive receptor-like kinase BSK12 from Arabidopsis thaliana (Mouse-ear cress).